The following is a 202-amino-acid chain: Peptide deformylase (202 aa).

The tract at residues 1 to 24 (MAGSFAQLAKNAEKKKPSISVSKE) is disordered. Cys-121 and His-163 together coordinate Fe cation. Glu-164 is an active-site residue. His-167 provides a ligand contact to Fe cation.

The protein belongs to the polypeptide deformylase family. Fe(2+) is required as a cofactor.

It catalyses the reaction N-terminal N-formyl-L-methionyl-[peptide] + H2O = N-terminal L-methionyl-[peptide] + formate. Functionally, removes the formyl group from the N-terminal Met of newly synthesized proteins. Requires at least a dipeptide for an efficient rate of reaction. N-terminal L-methionine is a prerequisite for activity but the enzyme has broad specificity at other positions. The chain is Peptide deformylase from Prochlorococcus marinus (strain NATL1A).